The following is a 467-amino-acid chain: 3-isopropylmalate dehydratase large subunit (467 aa).

Positions 348, 408, and 411 each coordinate [4Fe-4S] cluster. The interval 417-445 (DQLTPGERSASTSNRNFEGRQGKGGRTHL) is disordered.

The protein belongs to the aconitase/IPM isomerase family. LeuC type 1 subfamily. In terms of assembly, heterodimer of LeuC and LeuD. [4Fe-4S] cluster serves as cofactor.

It carries out the reaction (2R,3S)-3-isopropylmalate = (2S)-2-isopropylmalate. The protein operates within amino-acid biosynthesis; L-leucine biosynthesis; L-leucine from 3-methyl-2-oxobutanoate: step 2/4. Functionally, catalyzes the isomerization between 2-isopropylmalate and 3-isopropylmalate, via the formation of 2-isopropylmaleate. This Saccharopolyspora erythraea (strain ATCC 11635 / DSM 40517 / JCM 4748 / NBRC 13426 / NCIMB 8594 / NRRL 2338) protein is 3-isopropylmalate dehydratase large subunit.